The primary structure comprises 311 residues: Mitochondrial ribosome-associated GTPase 1 (311 aa).

The 174-residue stretch at A27–P200 folds into the CP-type G domain. Residues N74–D77, N144–S149, and G196 each bind GTP.

The protein belongs to the TRAFAC class YlqF/YawG GTPase family. MTG1 subfamily.

The protein resides in the mitochondrion inner membrane. Plays a role in the regulation of the mitochondrial ribosome assembly and of translational activity. Displays mitochondrial GTPase activity. In Xenopus tropicalis (Western clawed frog), this protein is Mitochondrial ribosome-associated GTPase 1.